Consider the following 130-residue polypeptide: MAQAQYAGTGRRKNAVARVRLVPGTGKITVNKKDVEEYIPHADLRLVINQPFAVTSTEGSYDVFVNVVGGGYAGQSGAIRHGIARALLEVDPDFRDALKRAGLLTRDARMVERKKPGLKKARKASQFSKR.

This sequence belongs to the universal ribosomal protein uS9 family.

The chain is Small ribosomal subunit protein uS9 from Streptococcus mutans serotype c (strain ATCC 700610 / UA159).